The following is a 334-amino-acid chain: Protein SCO1 homolog 1, mitochondrial (334 aa).

The transit peptide at methionine 1 to arginine 13 directs the protein to the mitochondrion. The segment at serine 74–valine 120 is disordered. Basic and acidic residues-rich tracts occupy residues threonine 79–glycine 99 and glycine 107–valine 120. A helical transmembrane segment spans residues valine 125–tyrosine 144. The 166-residue stretch at proline 166 to glutamine 331 folds into the Thioredoxin domain. Cu cation is bound by residues cysteine 206, cysteine 210, and histidine 295.

The protein belongs to the SCO1/2 family. Expressed in the whole plant with highest expression in imbibed seeds, embryos, endosperm, and root tips.

Its subcellular location is the mitochondrion inner membrane. Functionally, thought to play a role in cellular copper homeostasis, mitochondrial redox signaling or insertion of copper into the active site of COX. Plays an essential role in embryo development. This chain is Protein SCO1 homolog 1, mitochondrial (HCC1), found in Arabidopsis thaliana (Mouse-ear cress).